Reading from the N-terminus, the 161-residue chain is Aklanonic acid methyl ester cyclase DauD (161 aa).

Q106 serves as a coordination point for substrate. Positions 137 to 161 (WPTPEGWRPCPPPPRRRHDRSTDTP) are disordered.

This sequence belongs to the polyketide cyclase DnrD family. Homotetramer.

The enzyme catalyses methyl aklanonate = aklaviketone. It functions in the pathway antibiotic biosynthesis; daunorubicin biosynthesis. It participates in antibiotic biosynthesis; carminomycin biosynthesis. Its pathway is antibiotic biosynthesis; rhodomycin biosynthesis. The protein operates within antibiotic biosynthesis; aclacinomycin biosynthesis. Functionally, involved in the biosynthesis of aklavinone which is an important precursor common to the formation of the clinically significant anthracyclines such as carminomycin, daunorubicin (daunomycin), rhodomycin, aclacinomycin T (aklavin) and aclacinomycin A (aclarubicin). These compounds are aromatic polyketide antibiotics that exhibit high cytotoxicity and are widely applied in the chemotherapy of a variety of cancers. Catalyzes the cyclization of aklanonic acid methyl ester to yield aklaviketone. The sequence is that of Aklanonic acid methyl ester cyclase DauD (dauD) from Streptomyces sp. (strain C5).